Here is a 283-residue protein sequence, read N- to C-terminus: Pantothenate synthetase 1 (283 aa).

30–37 contributes to the ATP binding site; sequence MGYLHDGH. Catalysis depends on H37, which acts as the Proton donor. Q61 is a binding site for (R)-pantoate. Q61 lines the beta-alanine pocket. 147-150 provides a ligand contact to ATP; the sequence is GQKD. Q153 contributes to the (R)-pantoate binding site. Residues V176 and 184 to 187 each bind ATP; that span reads MSSR.

Belongs to the pantothenate synthetase family. As to quaternary structure, homodimer.

It localises to the cytoplasm. It carries out the reaction (R)-pantoate + beta-alanine + ATP = (R)-pantothenate + AMP + diphosphate + H(+). It participates in cofactor biosynthesis; (R)-pantothenate biosynthesis; (R)-pantothenate from (R)-pantoate and beta-alanine: step 1/1. Its function is as follows. Catalyzes the condensation of pantoate with beta-alanine in an ATP-dependent reaction via a pantoyl-adenylate intermediate. In Bradyrhizobium diazoefficiens (strain JCM 10833 / BCRC 13528 / IAM 13628 / NBRC 14792 / USDA 110), this protein is Pantothenate synthetase 1.